The primary structure comprises 174 residues: UPF0398 protein YfdB (174 aa).

Belongs to the UPF0398 family.

This chain is UPF0398 protein YfdB (yfdB), found in Lactococcus lactis subsp. lactis (strain IL1403) (Streptococcus lactis).